The following is a 105-amino-acid chain: Small ribosomal subunit protein eS10B (105 aa).

It belongs to the eukaryotic ribosomal protein eS10 family. Component of the small ribosomal subunit (SSU). Mature yeast ribosomes consist of a small (40S) and a large (60S) subunit. The 40S small subunit contains 1 molecule of ribosomal RNA (18S rRNA) and 33 different proteins (encoded by 57 genes). The large 60S subunit contains 3 rRNA molecules (25S, 5.8S and 5S rRNA) and 46 different proteins (encoded by 81 genes). eS10 interacts with GCN1 (via middle region); this interaction is direct and promotes GCN2 kinase activity. In terms of processing, the N-terminus is not modified.

It localises to the cytoplasm. Component of the ribosome, a large ribonucleoprotein complex responsible for the synthesis of proteins in the cell. The small ribosomal subunit (SSU) binds messenger RNAs (mRNAs) and translates the encoded message by selecting cognate aminoacyl-transfer RNA (tRNA) molecules. The large subunit (LSU) contains the ribosomal catalytic site termed the peptidyl transferase center (PTC), which catalyzes the formation of peptide bonds, thereby polymerizing the amino acids delivered by tRNAs into a polypeptide chain. The nascent polypeptides leave the ribosome through a tunnel in the LSU and interact with protein factors that function in enzymatic processing, targeting, and the membrane insertion of nascent chains at the exit of the ribosomal tunnel. eS10 plays a role as a positive regulator of the GCN2 kinase activity by stimulating GCN1-mediated GCN2 activation. The protein is Small ribosomal subunit protein eS10B of Saccharomyces cerevisiae (strain ATCC 204508 / S288c) (Baker's yeast).